Consider the following 312-residue polypeptide: Carbamate kinase 2 (312 aa).

It belongs to the carbamate kinase family.

It is found in the cytoplasm. The catalysed reaction is hydrogencarbonate + NH4(+) + ATP = carbamoyl phosphate + ADP + H2O + H(+). It functions in the pathway metabolic intermediate metabolism; carbamoyl phosphate degradation; CO(2) and NH(3) from carbamoyl phosphate: step 1/1. In Enterococcus faecalis (strain ATCC 700802 / V583), this protein is Carbamate kinase 2 (arcC2).